Consider the following 286-residue polypeptide: Protein HEAT-STRESS-ASSOCIATED 32 (286 aa).

It belongs to the phosphosulfolactate synthase family.

Its function is as follows. Transactivator required, together with HSP101, for long-term acquired thermotolerance (LAT) maintenance, probably by regulating heat-inducible genes expression, thus being a cellular component of thermomemory. This chain is Protein HEAT-STRESS-ASSOCIATED 32, found in Arabidopsis thaliana (Mouse-ear cress).